The following is a 441-amino-acid chain: Glutamyl-tRNA reductase (441 aa).

Residues 58 to 61 (TCNR), Ser-116, 121 to 123 (EPD), and Gln-127 contribute to the substrate site. Cys-59 serves as the catalytic Nucleophile. Position 195 to 200 (195 to 200 (GAGMAG)) interacts with NADP(+).

The protein belongs to the glutamyl-tRNA reductase family. In terms of assembly, homodimer.

The enzyme catalyses (S)-4-amino-5-oxopentanoate + tRNA(Glu) + NADP(+) = L-glutamyl-tRNA(Glu) + NADPH + H(+). It functions in the pathway porphyrin-containing compound metabolism; protoporphyrin-IX biosynthesis; 5-aminolevulinate from L-glutamyl-tRNA(Glu): step 1/2. Its function is as follows. Catalyzes the NADPH-dependent reduction of glutamyl-tRNA(Glu) to glutamate 1-semialdehyde (GSA). In Ignicoccus hospitalis (strain KIN4/I / DSM 18386 / JCM 14125), this protein is Glutamyl-tRNA reductase.